Here is a 146-residue protein sequence, read N- to C-terminus: Large ribosomal subunit protein uL15 (146 aa).

Residues Met1–Gln54 form a disordered region.

This sequence belongs to the universal ribosomal protein uL15 family. Part of the 50S ribosomal subunit.

Binds to the 23S rRNA. The protein is Large ribosomal subunit protein uL15 of Lachnoclostridium phytofermentans (strain ATCC 700394 / DSM 18823 / ISDg) (Clostridium phytofermentans).